Consider the following 549-residue polypeptide: Dihydroxy-acid dehydratase (549 aa).

Mg(2+) is bound at residue Asp78. Cys119 serves as a coordination point for [2Fe-2S] cluster. Residues Asp120 and Lys121 each coordinate Mg(2+). At Lys121 the chain carries N6-carboxylysine. [2Fe-2S] cluster is bound at residue Cys191. Glu441 lines the Mg(2+) pocket. Ser466 (proton acceptor) is an active-site residue.

It belongs to the IlvD/Edd family. As to quaternary structure, homodimer. [2Fe-2S] cluster is required as a cofactor. It depends on Mg(2+) as a cofactor.

The catalysed reaction is (2R)-2,3-dihydroxy-3-methylbutanoate = 3-methyl-2-oxobutanoate + H2O. It carries out the reaction (2R,3R)-2,3-dihydroxy-3-methylpentanoate = (S)-3-methyl-2-oxopentanoate + H2O. Its pathway is amino-acid biosynthesis; L-isoleucine biosynthesis; L-isoleucine from 2-oxobutanoate: step 3/4. It functions in the pathway amino-acid biosynthesis; L-valine biosynthesis; L-valine from pyruvate: step 3/4. Its function is as follows. Functions in the biosynthesis of branched-chain amino acids. Catalyzes the dehydration of (2R,3R)-2,3-dihydroxy-3-methylpentanoate (2,3-dihydroxy-3-methylvalerate) into 2-oxo-3-methylpentanoate (2-oxo-3-methylvalerate) and of (2R)-2,3-dihydroxy-3-methylbutanoate (2,3-dihydroxyisovalerate) into 2-oxo-3-methylbutanoate (2-oxoisovalerate), the penultimate precursor to L-isoleucine and L-valine, respectively. The chain is Dihydroxy-acid dehydratase from Methanobrevibacter smithii (strain ATCC 35061 / DSM 861 / OCM 144 / PS).